Consider the following 181-residue polypeptide: Adenine phosphoribosyltransferase (181 aa).

Belongs to the purine/pyrimidine phosphoribosyltransferase family. In terms of assembly, homodimer.

It is found in the cytoplasm. It carries out the reaction AMP + diphosphate = 5-phospho-alpha-D-ribose 1-diphosphate + adenine. It participates in purine metabolism; AMP biosynthesis via salvage pathway; AMP from adenine: step 1/1. In terms of biological role, catalyzes a salvage reaction resulting in the formation of AMP, that is energically less costly than de novo synthesis. The chain is Adenine phosphoribosyltransferase from Methylorubrum populi (strain ATCC BAA-705 / NCIMB 13946 / BJ001) (Methylobacterium populi).